The sequence spans 364 residues: Fructose-1,6-bisphosphatase class 1 2 (364 aa).

Positions 101, 123, 125, and 126 each coordinate Mg(2+). Substrate is bound by residues 126–129 and Asn218; that span reads DGSS. Glu290 contributes to the Mg(2+) binding site.

It belongs to the FBPase class 1 family. As to quaternary structure, homotetramer. Mg(2+) is required as a cofactor.

It is found in the cytoplasm. The catalysed reaction is beta-D-fructose 1,6-bisphosphate + H2O = beta-D-fructose 6-phosphate + phosphate. The protein operates within carbohydrate biosynthesis; gluconeogenesis. In Cupriavidus taiwanensis (strain DSM 17343 / BCRC 17206 / CCUG 44338 / CIP 107171 / LMG 19424 / R1) (Ralstonia taiwanensis (strain LMG 19424)), this protein is Fructose-1,6-bisphosphatase class 1 2.